A 60-amino-acid chain; its full sequence is Large ribosomal subunit protein uL30 (60 aa).

This sequence belongs to the universal ribosomal protein uL30 family. As to quaternary structure, part of the 50S ribosomal subunit.

This is Large ribosomal subunit protein uL30 from Azoarcus sp. (strain BH72).